The chain runs to 464 residues: ATP synthase subunit beta (464 aa).

153 to 160 contributes to the ATP binding site; it reads GGAGVGKT.

Belongs to the ATPase alpha/beta chains family. F-type ATPases have 2 components, CF(1) - the catalytic core - and CF(0) - the membrane proton channel. CF(1) has five subunits: alpha(3), beta(3), gamma(1), delta(1), epsilon(1). CF(0) has three main subunits: a(1), b(2) and c(9-12). The alpha and beta chains form an alternating ring which encloses part of the gamma chain. CF(1) is attached to CF(0) by a central stalk formed by the gamma and epsilon chains, while a peripheral stalk is formed by the delta and b chains.

It localises to the cell inner membrane. The enzyme catalyses ATP + H2O + 4 H(+)(in) = ADP + phosphate + 5 H(+)(out). Functionally, produces ATP from ADP in the presence of a proton gradient across the membrane. The catalytic sites are hosted primarily by the beta subunits. The sequence is that of ATP synthase subunit beta from Burkholderia lata (strain ATCC 17760 / DSM 23089 / LMG 22485 / NCIMB 9086 / R18194 / 383).